A 275-amino-acid polypeptide reads, in one-letter code: Putative ABC transporter permease protein ORF2 (275 aa).

A run of 6 helical transmembrane segments spans residues tyrosine 11–phenylalanine 31, isoleucine 74–phenylalanine 94, leucine 108–threonine 128, threonine 136–leucine 156, isoleucine 185–leucine 205, and isoleucine 239–phenylalanine 259. Positions leucine 69–glycine 260 constitute an ABC transmembrane type-1 domain.

The protein belongs to the binding-protein-dependent transport system permease family. MalFG subfamily.

It localises to the cell membrane. In Caldicellulosiruptor sp. (strain Rt8B.4), this protein is Putative ABC transporter permease protein ORF2.